Here is a 238-residue protein sequence, read N- to C-terminus: Flagellar L-ring protein (238 aa).

Residues 1-17 form the signal peptide; sequence MIRKTLAASCAVLLMAG. The N-palmitoyl cysteine moiety is linked to residue Cys-18. Cys-18 is lipidated: S-diacylglycerol cysteine.

This sequence belongs to the FlgH family. In terms of assembly, the basal body constitutes a major portion of the flagellar organelle and consists of four rings (L,P,S, and M) mounted on a central rod.

It localises to the cell outer membrane. It is found in the bacterial flagellum basal body. Assembles around the rod to form the L-ring and probably protects the motor/basal body from shearing forces during rotation. This is Flagellar L-ring protein from Nitratidesulfovibrio vulgaris (strain ATCC 29579 / DSM 644 / CCUG 34227 / NCIMB 8303 / VKM B-1760 / Hildenborough) (Desulfovibrio vulgaris).